A 232-amino-acid polypeptide reads, in one-letter code: MKRAVVVFSGGQDSTTCLIQALKQYDEVHCVTFDYGQRHRAEIEVAQELSVALGAKAHKLLDVGLLNELAISSLTRDNIPVPAYDSTQSNGLPSTFVPGRNILFLTLAAIYAYQVEAEAVITGVCETDFSGYPDCRDEFVKALNQAIVLGIARDIRFETPLMWLNKAETWALADYYHQLELVQQDTLTCYNGIKGNGCGECAACHLRANGLQQYQINKAEVMASLKQKTGLV.

Residue 8–18 (FSGGQDSTTCL) participates in ATP binding. Positions 189, 198, 201, and 204 each coordinate Zn(2+).

This sequence belongs to the QueC family. Zn(2+) serves as cofactor.

The catalysed reaction is 7-carboxy-7-deazaguanine + NH4(+) + ATP = 7-cyano-7-deazaguanine + ADP + phosphate + H2O + H(+). It functions in the pathway purine metabolism; 7-cyano-7-deazaguanine biosynthesis. Functionally, catalyzes the ATP-dependent conversion of 7-carboxy-7-deazaguanine (CDG) to 7-cyano-7-deazaguanine (preQ(0)). In Serratia proteamaculans (strain 568), this protein is 7-cyano-7-deazaguanine synthase.